Reading from the N-terminus, the 410-residue chain is Caspase-1 (410 aa).

The region spanning 1–91 is the CARD domain; it reads MADKVLKGKR…HLAETLGLSS (91 aa). Residues 1 to 119 constitute a propeptide that is removed on maturation; that stretch reads MADKVLKGKR…PLPASVNNMP (119 aa). Positions 88-104 are enriched in polar residues; sequence GLSSSPQSGNSQNTTDS. Positions 88 to 125 are disordered; it reads GLSSSPQSGNSQNTTDSEVAFPPLPASVNNMPGPAEPE. Catalysis depends on residues H235 and C284. The propeptide occupies 297-322; the sequence is SPAAPMDSTSQMGSSLSQVGDNLEDD.

Belongs to the peptidase C14A family. As to quaternary structure, heterotetramer that consists of two anti-parallel arranged heterodimers, each one formed by a 20 kDa (Caspase-1 subunit p20) and a 10 kDa (Caspase-1 subunit p10) subunit. May be a component of the inflammasome, a protein complex which also includes PYCARD, CARD8 and NLRP2 and whose function would be the activation of pro-inflammatory caspases. Component of the AIM2 PANoptosome complex, a multiprotein complex that drives inflammatory cell death (PANoptosis). Both the p10 and p20 subunits interact with MEFV. Interacts with CARD17P/INCA and CARD18. Interacts with SERPINB1; this interaction regulates CASP1 activity. Heterotetramer that consists of two anti-parallel arranged heterodimers, each one formed by a 20 kDa (Caspase-1 subunit p20) and a 10 kDa (Caspase-1 subunit p10) subunit. The two subunits are derived from the precursor sequence by an autocatalytic mechanism. In terms of processing, ubiquitinated via 'Lys-11'-linked polyubiquitination. Deubiquitinated by USP8.

The protein localises to the cytoplasm. It localises to the cell membrane. The enzyme catalyses Strict requirement for an Asp residue at position P1 and has a preferred cleavage sequence of Tyr-Val-Ala-Asp-|-.. Functionally, thiol protease involved in a variety of inflammatory processes by proteolytically cleaving other proteins, such as the precursors of the inflammatory cytokines interleukin-1 beta (IL1B) and interleukin 18 (IL18) as well as the pyroptosis inducer Gasdermin-D (GSDMD), into active mature peptides. Plays a key role in cell immunity as an inflammatory response initiator: once activated through formation of an inflammasome complex, it initiates a pro-inflammatory response through the cleavage of the two inflammatory cytokines IL1B and IL18, releasing the mature cytokines which are involved in a variety of inflammatory processes. Cleaves a tetrapeptide after an Asp residue at position P1. Also initiates pyroptosis, a programmed lytic cell death pathway, through cleavage of GSDMD. In contrast to cleavage of interleukin IL1B, recognition and cleavage of GSDMD is not strictly dependent on the consensus cleavage site but depends on an exosite interface on CASP1 that recognizes and binds the Gasdermin-D, C-terminal (GSDMD-CT) part. Cleaves and activates CASP7 in response to bacterial infection, promoting plasma membrane repair. Upon inflammasome activation, during DNA virus infection but not RNA virus challenge, controls antiviral immunity through the cleavage of CGAS, rendering it inactive. In apoptotic cells, cleaves SPHK2 which is released from cells and remains enzymatically active extracellularly. This is Caspase-1 (CASP1) from Felis catus (Cat).